Here is a 476-residue protein sequence, read N- to C-terminus: Lactate utilization protein B 1 (476 aa).

4Fe-4S ferredoxin-type domains follow at residues 301 to 331 (GTEFQSVLQCIRCAACINVCPVYRHIGGHAY) and 350 to 379 (YDEYKDLPYASSLCGACTEACPVKIPLHDL). Cys310, Cys313, Cys316, Cys320, Cys363, Cys366, and Cys370 together coordinate [4Fe-4S] cluster.

This sequence belongs to the LutB/YkgF family.

Its function is as follows. Is involved in L-lactate degradation and allows cells to grow with lactate as the sole carbon source. Has probably a role as an electron transporter during oxidation of L-lactate. The chain is Lactate utilization protein B 1 from Bacillus mycoides (strain KBAB4) (Bacillus weihenstephanensis).